We begin with the raw amino-acid sequence, 425 residues long: Succinate--CoA ligase [ADP-forming] subunit beta, mitochondrial (425 aa).

The N-terminal 14 residues, 1-14, are a transit peptide targeting the mitochondrion; sequence NNHGLQIQQQQQRN. The ATP-grasp domain occupies 23–250; that stretch reads MELLQEAGVS…SNSAYRQKKI (228 aa). Position 40 is an N6-acetyllysine (Lys40). Tyr46 is subject to Phosphotyrosine. Lys50 is subject to N6-acetyllysine; alternate. Lys50 carries the N6-succinyllysine; alternate modification. Residues Lys60 and 67–69 contribute to the ATP site; that span reads GRG. Lys91, Lys101, Lys105, and Lys178 each carry N6-acetyllysine. Mg(2+) is bound by residues Asn220 and Asp234. A Phosphoserine modification is found at Ser241. Position 285 (Asn285) interacts with substrate. Position 303 is a phosphothreonine (Thr303). Residue Lys330 is modified to N6-acetyllysine. 342–344 is a substrate binding site; that stretch reads GIM. An N6-acetyllysine modification is found at Lys400.

It belongs to the succinate/malate CoA ligase beta subunit family. ATP-specific subunit beta subfamily. Heterodimer of an alpha and a beta subunit. The beta subunit determines specificity for ATP. Interacts with ALAS2. It depends on Mg(2+) as a cofactor.

It localises to the mitochondrion. It carries out the reaction succinate + ATP + CoA = succinyl-CoA + ADP + phosphate. Its pathway is carbohydrate metabolism; tricarboxylic acid cycle; succinate from succinyl-CoA (ligase route): step 1/1. Functionally, ATP-specific succinyl-CoA synthetase functions in the citric acid cycle (TCA), coupling the hydrolysis of succinyl-CoA to the synthesis of ATP and thus represents the only step of substrate-level phosphorylation in the TCA. The beta subunit provides nucleotide specificity of the enzyme and binds the substrate succinate, while the binding sites for coenzyme A and phosphate are found in the alpha subunit. The chain is Succinate--CoA ligase [ADP-forming] subunit beta, mitochondrial from Sus scrofa (Pig).